Here is a 1182-residue protein sequence, read N- to C-terminus: Phosphatidylinositol 3-kinase age-1 (1182 aa).

Residues 1-16 (MSMGRSPSTTFRSRTG) show a composition bias toward polar residues. The segment at 1-24 (MSMGRSPSTTFRSRTGSHGARDLI) is disordered. Residues 74–174 (NEGVADIITM…FPMLFLYQPD (101 aa)) enclose the PI3K-ABD domain. A PI3K-RBD domain is found at 266-358 (KRKAEINGVC…YRCPGFVVRR (93 aa)). Residues 425-577 (LDANLMIRPV…SSYGGRVRMP (153 aa)) enclose the C2 PI3K-type domain. One can recognise a PIK helical domain in the interval 601–788 (DDYESCIRDP…SLLMEAYLRG (188 aa)). The region spanning 853-1168 (IIDKAIVLGS…IYEEAFNGSW (316 aa)) is the PI3K/PI4K catalytic domain. The G-loop stretch occupies residues 859–865 (VLGSAKR). A catalytic loop region spans residues 1028-1036 (GIKDRHSDN). Positions 1047-1073 (HIDFGHILGHGKTKLGIQRDRQPFILT) are activation loop.

This sequence belongs to the PI3/PI4-kinase family.

It catalyses the reaction a 1,2-diacyl-sn-glycero-3-phospho-(1D-myo-inositol) + ATP = a 1,2-diacyl-sn-glycero-3-phospho-(1D-myo-inositol-3-phosphate) + ADP + H(+). Its function is as follows. Phosphatidylinositol 3-kinase homolog that regulates longevity and diapause. Promotes cell survival during embryonic development by recruiting akt-1/2 to the plasma membrane through the production of PtdIns(3,4,5)P3. Could function in the development or neuroendocrine signaling of the dauer pathway. Mediates susceptibility to enteropathogenic E.coli infection. May negatively regulate AYI interneuron neurite outgrowth. Plays a role in aversive olfactory learning when an odor is associated with food deprivation. Regulates this process by promoting the nuclear relocalization of egl-4 in AWC olfactory neurons after odor conditioning. This Caenorhabditis elegans protein is Phosphatidylinositol 3-kinase age-1.